We begin with the raw amino-acid sequence, 338 residues long: MLSALARPAGAALRRSFSTSAQNNAKVAVLGASGGIGQPLSLLLKNSPLVSRLTLYDIAHTPGVAADLSHIETRANVKGYLGPEQLPDCLKGCDVVVIPAGVPRKPGMTRDDLFNTNATIVATLTAACAQHCPEAMVCIIANPVNSTIPITAEVFKKHGVYNPNKIFGVTTLDIVRANTFVAELKGLDPARVNVPVIGGHAGKTIIPLISQCTPKVDFPQDQLATLTGRIQEAGTEVVKAKAGAGSATLSMAYAGARFVFSLVDAMNGKEGVVECSFVQSKETECTYFSTPLLLGKKGLEKNLGIGKITPFEEKMIAEAIPELKASIKKGEDFVKNMK.

The transit peptide at 1 to 24 directs the protein to the mitochondrion; the sequence is MLSALARPAGAALRRSFSTSAQNN. Residues 31–37 and Asp-57 contribute to the NAD(+) site; that span reads GASGGIG. A glycan (O-linked (GlcNAc) serine) is linked at Ser-33. N6-acetyllysine; alternate is present on residues Lys-78 and Lys-91. Lys-78 and Lys-91 each carry N6-succinyllysine; alternate. Positions 104 and 110 each coordinate substrate. NAD(+) is bound by residues Asn-117 and 140–142; that span reads IAN. Substrate is bound at residue Asn-142. An N6-acetyllysine modification is found at Lys-165. Arg-176 lines the substrate pocket. Lys-185 carries the post-translational modification N6-acetyllysine; alternate. Residue Lys-185 is modified to N6-succinyllysine; alternate. His-200 (proton acceptor) is an active-site residue. Lys-203 is modified (N6-succinyllysine). 2 positions are modified to N6-acetyllysine; alternate: Lys-215 and Lys-239. Lys-215 and Lys-239 each carry N6-succinyllysine; alternate. Residue Lys-239 is modified to N6-malonyllysine; alternate. At Ser-246 the chain carries Phosphoserine. NAD(+) is bound at residue Met-251. Lys-269 is modified (N6-succinyllysine). N6-acetyllysine; alternate is present on residues Lys-296, Lys-301, and Lys-307. Residues Lys-296, Lys-301, and Lys-307 each carry the N6-succinyllysine; alternate modification. Lys-307 is subject to N6-malonyllysine; alternate. Thr-309 carries the post-translational modification Phosphothreonine. Residues Lys-314 and Lys-324 each carry the N6-acetyllysine; alternate modification. Residues Lys-314 and Lys-324 each carry the N6-succinyllysine; alternate modification. Position 326 is a phosphoserine (Ser-326). Lys-328, Lys-329, and Lys-335 each carry N6-acetyllysine; alternate. At Lys-328 the chain carries N6-succinyllysine; alternate. Lys-329 is modified (N6-malonyllysine; alternate). Lys-335 bears the N6-succinyllysine; alternate mark.

Belongs to the LDH/MDH superfamily. MDH type 1 family. Homodimer. In terms of processing, acetylation is enhanced after treatment either with trichostin A (TCA) or with nicotinamide (NAM) with the appearance of tri- and tetraacetylations. Glucose also increases acetylation. Acetylation of Lys-239 and Lys-314 is observed in liver mitochondria from fasted mice but not from fed mice.

The protein resides in the mitochondrion matrix. The enzyme catalyses (S)-malate + NAD(+) = oxaloacetate + NADH + H(+). Its activity is regulated as follows. Enzyme activity is enhanced by acetylation. This is Malate dehydrogenase, mitochondrial (Mdh2) from Mus musculus (Mouse).